The following is a 111-amino-acid chain: uncharacterized protein (111 aa).

This is an uncharacterized protein from Enterococcus faecalis (strain ATCC 700802 / V583).